The sequence spans 162 residues: Cadmium metallothionein (162 aa).

A propeptide spanning residues 1–2 (MD) is cleaved from the precursor.

Functionally, the metallothioneins are involved in the cellular sequestration of toxic metal ions. The sequence is that of Cadmium metallothionein (MTT1) from Tetrahymena thermophila.